We begin with the raw amino-acid sequence, 407 residues long: Substance-P receptor (407 aa).

The Extracellular segment spans residues 1 to 31 (MDNVLPVDSDLFPNISTNTSEPNQFVQPAWQ). N-linked (GlcNAc...) asparagine glycosylation is found at Asn-14 and Asn-18. A helical transmembrane segment spans residues 32 to 54 (IVLWAAAYTVIVVTSVVGNVVVM). Over 55-64 (WIILAHKRMR) the chain is Cytoplasmic. Residues 65–86 (TVTNYFLVNLAFAEASMAAFNT) traverse the membrane as a helical segment. Topologically, residues 87–106 (VVNFTYAVHNEWYYGLFYCK) are extracellular. Cys-105 and Cys-180 are oxidised to a cystine. The helical transmembrane segment at 107-128 (FHNFFPIAAVFASIYSMTAVAF) threads the bilayer. At 129–148 (DRYMAIIHPLQPRLSATATK) the chain is on the cytoplasmic side. A helical membrane pass occupies residues 149-169 (VVICVIWVLALLLAFPQGYYS). Residues 170–194 (TTETMPGRVVCMIEWPSHPDKIYEK) are Extracellular-facing. The helical transmembrane segment at 195 to 219 (VYHICVTVLIYFLPLLVIGYAYTVV) threads the bilayer. The Cytoplasmic segment spans residues 220 to 248 (GITLWASEIPGDSSDRYHEQVSAKRKVVK). Residues 249 to 270 (MMIVVVCTFAICWLPFHIFFLL) traverse the membrane as a helical segment. The Extracellular portion of the chain corresponds to 271 to 283 (PYINPDLYLKKFI). A helical transmembrane segment spans residues 284 to 308 (QQVYLAIMWLAMSSTMYNPIIYCCL). At 309 to 407 (NDRFRLGFKH…SSSFYSNMLS (99 aa)) the chain is on the cytoplasmic side. Cys-322 is lipidated: S-palmitoyl cysteine. The interval 363–407 (GAHEEDPEEGPKATPSSLDLTSNGSSRSNSKTVTESSSFYSNMLS) is disordered. A compositionally biased stretch (polar residues) spans 376–407 (TPSSLDLTSNGSSRSNSKTVTESSSFYSNMLS).

The protein belongs to the G-protein coupled receptor 1 family. Interacts with ARRB1.

It localises to the cell membrane. Its function is as follows. This is a receptor for the tachykinin neuropeptide substance P. It is probably associated with G proteins that activate a phosphatidylinositol-calcium second messenger system. The rank order of affinity of this receptor to tachykinins is: substance P &gt; substance K &gt; neuromedin-K. This is Substance-P receptor (TACR1) from Cavia porcellus (Guinea pig).